A 198-amino-acid chain; its full sequence is Large ribosomal subunit protein uL24c (198 aa).

The N-terminal 50 residues, 1–50 (MATMSALQSSFTSLSLSPSSSFLGQRLISPISLSVTSPVKPAENPCLVLA), are a transit peptide targeting the chloroplast.

This sequence belongs to the universal ribosomal protein uL24 family. As to quaternary structure, part of the 50S ribosomal subunit.

The protein resides in the plastid. Its subcellular location is the chloroplast. In terms of biological role, one of two assembly initiator proteins, it binds directly to the 5'-end of the 23S rRNA, where it nucleates assembly of the 50S subunit. Required for optimal plastid performance in terms of photosynthesis and growth. Required for the translation of plastid mRNAs. Plays a critical role in biosynthesis of thylakoid membrane proteins encoded by chloroplast genes. This Arabidopsis thaliana (Mouse-ear cress) protein is Large ribosomal subunit protein uL24c (RPL24).